Consider the following 265-residue polypeptide: Capsule polysaccharide export inner-membrane protein BexB (265 aa).

6 consecutive transmembrane segments (helical) span residues 37-57 (IGFFWLFVEPLLMTFFIVMMW), 64-84 (KFSTLNMIAFVMTGYPMAMMW), 118-138 (LLEVAGASIAQILFMAILVMI), 151-171 (LIAWFLMAMFAFALGLIICAI), 178-198 (FGKIWGTLSFVLLPISGAFFF), and 235-255 (ESIGFLVVSDLALLLLGLVMV). In terms of domain architecture, ABC transmembrane type-2 spans 37–258 (IGFFWLFVEP…LLGLVMVKNF (222 aa)).

The protein belongs to the ABC-2 integral membrane protein family.

It is found in the cell inner membrane. Its function is as follows. May form an ATP-driven capsule polysaccharide export apparatus, in association with the BexA, BexC and BexD proteins. This is Capsule polysaccharide export inner-membrane protein BexB (bexB) from Haemophilus influenzae.